Here is a 614-residue protein sequence, read N- to C-terminus: Type VII secretion system protein EssD (614 aa).

The tract at residues 417–445 is disordered; sequence QNHVTHGPKDSMVRSEGKHSISSHEMNSS. The span at 423–435 shows a compositional bias: basic and acidic residues; sequence GPKDSMVRSEGKH.

It belongs to the EssD family. As to quaternary structure, interacts (via C-terminal) with EssG; this interaction blocks EssD activity. Interacts with EssE.

It localises to the secreted. The protein localises to the cell membrane. In terms of biological role, component of the type VII secretion system (Ess). Plays a role in Ess secretion during infection. Required for the efficient secretion of EsxA. Required for abscess formation and staphylococcal persistence in host tissues. Possesses a toxic DNase activity that is modulated by EsaG by forming a nuclease toxin-antitoxin pair. This nuclease toxin targets competitor bacteria. The protein is Type VII secretion system protein EssD of Staphylococcus aureus (strain USA300).